The sequence spans 97 residues: Large ribosomal subunit protein bL27 (97 aa).

The propeptide occupies 1-12 (MLKMNLANLQLF). The interval 14–37 (HKKGGGSTSNGRDSQAKRLGAKAA) is disordered.

Belongs to the bacterial ribosomal protein bL27 family. The N-terminus is cleaved by ribosomal processing cysteine protease Prp.

This is Large ribosomal subunit protein bL27 from Streptococcus agalactiae serotype III (strain NEM316).